The sequence spans 432 residues: 3-phosphoshikimate 1-carboxyvinyltransferase (432 aa).

Residues Lys23, Ser24, and Arg28 each coordinate 3-phosphoshikimate. Residue Lys23 participates in phosphoenolpyruvate binding. The phosphoenolpyruvate site is built by Gly95 and Arg123. 3-phosphoshikimate is bound by residues Ser167, Gln169, Asp317, and Lys344. A phosphoenolpyruvate-binding site is contributed by Gln169. Asp317 (proton acceptor) is an active-site residue. The phosphoenolpyruvate site is built by Arg348 and Arg390.

It belongs to the EPSP synthase family. Monomer.

It is found in the cytoplasm. It catalyses the reaction 3-phosphoshikimate + phosphoenolpyruvate = 5-O-(1-carboxyvinyl)-3-phosphoshikimate + phosphate. It functions in the pathway metabolic intermediate biosynthesis; chorismate biosynthesis; chorismate from D-erythrose 4-phosphate and phosphoenolpyruvate: step 6/7. In terms of biological role, catalyzes the transfer of the enolpyruvyl moiety of phosphoenolpyruvate (PEP) to the 5-hydroxyl of shikimate-3-phosphate (S3P) to produce enolpyruvyl shikimate-3-phosphate and inorganic phosphate. The chain is 3-phosphoshikimate 1-carboxyvinyltransferase from Staphylococcus carnosus (strain TM300).